The following is a 473-amino-acid chain: FAD-dependent oxidoreductase dpchF (473 aa).

An N-terminal signal peptide occupies residues 1-21; that stretch reads MKLSFIASPVWALALAQFAAA. N-linked (GlcNAc...) asparagine glycans are attached at residues asparagine 98, asparagine 128, asparagine 181, asparagine 262, and asparagine 330.

This sequence belongs to the beta-cyclopiazonate dehydrogenase family. Requires FAD as cofactor.

It participates in secondary metabolite biosynthesis; terpenoid biosynthesis. In terms of biological role, FAD-dependent oxidoreductase; part of the gene cluster that mediates the biosynthesis of the diterpenoid pyrones higginsianins A and B. The first step of the pathway is the synthesis of the alpha-pyrone moiety by the polyketide synthase dpchA via condensation of one acetyl-CoA starter unit with 3 malonyl-CoA units and 2 methylations. The alpha-pyrone is then combined with geranylgeranyl pyrophosphate (GGPP) formed by the GGPP synthase dpchD through the action of the prenyltransferase dpchC to yield a linear alpha-pyrone diterpenoid. Subsequent steps in the diterpenoid pyrone biosynthetic pathway involve the decalin core formation, which is initiated by the epoxidation of the C10-C11 olefin by the FAD-dependent oxidoreductase dpchE, and is followed by a cyclization cascade catalyzed by the terpene cyclase dpchB. The short chain dehydrogenase/reductase dpchG then oxidizes the 8S hydroxy group to a ketone and the short chain dehydrogenase/reductase dpchH reduces the ketone to the 8R hydroxy group to yield higginsianin B. Finally, the FAD-dependent oxidoreductase dpchF converts higginsianin B into higginsianin A. The protein is FAD-dependent oxidoreductase dpchF of Colletotrichum higginsianum (strain IMI 349063) (Crucifer anthracnose fungus).